The sequence spans 392 residues: Phosphoglycerate kinase (392 aa).

Substrate-binding positions include D21–N23, R36, H59–R62, R113, and R146. ATP-binding positions include K197, E319, and G345–T348.

It belongs to the phosphoglycerate kinase family. As to quaternary structure, monomer.

The protein resides in the cytoplasm. The catalysed reaction is (2R)-3-phosphoglycerate + ATP = (2R)-3-phospho-glyceroyl phosphate + ADP. It participates in carbohydrate degradation; glycolysis; pyruvate from D-glyceraldehyde 3-phosphate: step 2/5. This is Phosphoglycerate kinase from Thioalkalivibrio sulfidiphilus (strain HL-EbGR7).